A 165-amino-acid polypeptide reads, in one-letter code: uncharacterized protein (165 aa).

5 helical membrane passes run 30–50, 65–85, 86–106, 108–128, and 131–151; these read GWEL…AAGG, GMVW…VSGL, SAFW…VWQG, FWLL…FASG, and WTVT…SEYG.

To E.coli YcdZ.

Its subcellular location is the cell membrane. This is an uncharacterized protein from Escherichia coli (strain K12).